We begin with the raw amino-acid sequence, 141 residues long: ATP synthase epsilon chain (141 aa).

Belongs to the ATPase epsilon chain family. F-type ATPases have 2 components, CF(1) - the catalytic core - and CF(0) - the membrane proton channel. CF(1) has five subunits: alpha(3), beta(3), gamma(1), delta(1), epsilon(1). CF(0) has three main subunits: a, b and c.

It is found in the cell inner membrane. Functionally, produces ATP from ADP in the presence of a proton gradient across the membrane. The protein is ATP synthase epsilon chain of Azoarcus sp. (strain BH72).